Here is a 155-residue protein sequence, read N- to C-terminus: Interleukin-36 receptor antagonist protein (155 aa).

A disulfide bond links Cys8 and Cys154.

Belongs to the IL-1 family. Interacts with cargo receptor TMED10; the interaction mediates the translocation from the cytoplasm into the ERGIC (endoplasmic reticulum-Golgi intermediate compartment) and thereby secretion. Predominantly expressed in skin keratinocytes but not in fibroblasts, endothelial cells or melanocytes. Detected also in the spleen, brain leukocyte and macrophage cell types. Increased in lesional psoriasis skin.

The protein localises to the cytoplasm. Its subcellular location is the secreted. In terms of biological role, inhibits the activity of interleukin-36 (IL36A,IL36B and IL36G) by binding to receptor IL1RL2 and preventing its association with the coreceptor IL1RAP for signaling. Part of the IL-36 signaling system that is thought to be present in epithelial barriers and to take part in local inflammatory response; similar to the IL-1 system with which it shares the coreceptor. Proposed to play a role in skin inflammation. May be involved in the innate immune response to fungal pathogens, such as Aspergillus fumigatus. May activate an anti-inflammatory signaling pathway by recruiting SIGIRR. The chain is Interleukin-36 receptor antagonist protein from Homo sapiens (Human).